We begin with the raw amino-acid sequence, 155 residues long: Deoxyuridine 5'-triphosphate nucleotidohydrolase (155 aa).

Residues 74 to 76, Asn87, and 91 to 93 each bind substrate; these read RSG and TID.

It belongs to the dUTPase family. It depends on Mg(2+) as a cofactor.

It carries out the reaction dUTP + H2O = dUMP + diphosphate + H(+). The protein operates within pyrimidine metabolism; dUMP biosynthesis; dUMP from dCTP (dUTP route): step 2/2. This enzyme is involved in nucleotide metabolism: it produces dUMP, the immediate precursor of thymidine nucleotides and it decreases the intracellular concentration of dUTP so that uracil cannot be incorporated into DNA. The chain is Deoxyuridine 5'-triphosphate nucleotidohydrolase from Dinoroseobacter shibae (strain DSM 16493 / NCIMB 14021 / DFL 12).